The following is a 197-amino-acid chain: Holliday junction branch migration complex subunit RuvA (197 aa).

Residues 1–63 are domain I; that stretch reads MFDYIKGQLT…EDAHLLFGFH (63 aa). Residues 64–142 form a domain II region; it reads TENEKDVFLK…TIPEGGQAQQ (79 aa). The flexible linker stretch occupies residues 142–146; the sequence is QMPKA. The tract at residues 147–197 is domain III; sequence KGNQQLDEAIEALLALGYKATELKKIRAFFEGTDDTAEQYIKSALKMLMKG.

It belongs to the RuvA family. Homotetramer. Forms an RuvA(8)-RuvB(12)-Holliday junction (HJ) complex. HJ DNA is sandwiched between 2 RuvA tetramers; dsDNA enters through RuvA and exits via RuvB. An RuvB hexamer assembles on each DNA strand where it exits the tetramer. Each RuvB hexamer is contacted by two RuvA subunits (via domain III) on 2 adjacent RuvB subunits; this complex drives branch migration. In the full resolvosome a probable DNA-RuvA(4)-RuvB(12)-RuvC(2) complex forms which resolves the HJ.

It localises to the cytoplasm. The RuvA-RuvB-RuvC complex processes Holliday junction (HJ) DNA during genetic recombination and DNA repair, while the RuvA-RuvB complex plays an important role in the rescue of blocked DNA replication forks via replication fork reversal (RFR). RuvA specifically binds to HJ cruciform DNA, conferring on it an open structure. The RuvB hexamer acts as an ATP-dependent pump, pulling dsDNA into and through the RuvAB complex. HJ branch migration allows RuvC to scan DNA until it finds its consensus sequence, where it cleaves and resolves the cruciform DNA. This chain is Holliday junction branch migration complex subunit RuvA, found in Streptococcus uberis (strain ATCC BAA-854 / 0140J).